We begin with the raw amino-acid sequence, 104 residues long: Inner membrane protein YjeO (104 aa).

The Cytoplasmic portion of the chain corresponds to 1 to 5; the sequence is MSARM. The chain crosses the membrane as a helical span at residues 6–26; sequence FVLCCIWFIVAFLWITITSAL. The Periplasmic portion of the chain corresponds to 27-52; it reads DKEWMIDGRGINNVCDVLMYLEEDDT. Residues 53–73 traverse the membrane as a helical segment; the sequence is RDVGVIMTLPLFFPFLWFALW. The Cytoplasmic segment spans residues 74 to 77; that stretch reads RKKR. The chain crosses the membrane as a helical span at residues 78–98; the sequence is GWFMYATALAIFGYWLWQFFL. Residues 99-104 lie on the Periplasmic side of the membrane; that stretch reads RYQFCL.

The protein localises to the cell inner membrane. This is Inner membrane protein YjeO (yjeO) from Escherichia coli (strain K12).